The primary structure comprises 212 residues: Probable plastid-lipid-associated protein 11, chloroplastic (212 aa).

Residues 1 to 25 constitute a chloroplast transit peptide; it reads MALALSLSACSPPLRRTRRAGFRTS.

It belongs to the PAP/fibrillin family.

The protein localises to the plastid. The protein resides in the chloroplast thylakoid. The chain is Probable plastid-lipid-associated protein 11, chloroplastic (PAP11) from Arabidopsis thaliana (Mouse-ear cress).